Reading from the N-terminus, the 148-residue chain is 3-dehydroquinate dehydratase (148 aa).

Y23 (proton acceptor) is an active-site residue. 3 residues coordinate substrate: N75, H81, and D88. The active-site Proton donor is the H101. Substrate-binding positions include 102–103 (LS) and R112.

The protein belongs to the type-II 3-dehydroquinase family. In terms of assembly, homododecamer.

It catalyses the reaction 3-dehydroquinate = 3-dehydroshikimate + H2O. It functions in the pathway metabolic intermediate biosynthesis; chorismate biosynthesis; chorismate from D-erythrose 4-phosphate and phosphoenolpyruvate: step 3/7. In terms of biological role, catalyzes a trans-dehydration via an enolate intermediate. The chain is 3-dehydroquinate dehydratase from Xanthomonas campestris pv. campestris (strain B100).